Reading from the N-terminus, the 1259-residue chain is Receptor tyrosine-protein kinase erbB-2 (1259 aa).

The signal sequence occupies residues 1–22; it reads MELAAWCRWGLLLALLPSGAAG. At 23-653 the chain is on the extracellular side; it reads TQVCTGTDMK…EQRASPVTSI (631 aa). Residues Cys-26 and Cys-53 are joined by a disulfide bond. N-linked (GlcNAc...) asparagine glycosylation occurs at Asn-68. Cystine bridges form between Cys-162-Cys-192, Cys-195-Cys-204, Cys-199-Cys-212, Cys-220-Cys-227, Cys-224-Cys-235, Cys-236-Cys-244, Cys-240-Cys-252, Cys-255-Cys-264, Cys-268-Cys-295, Cys-299-Cys-311, Cys-315-Cys-331, Cys-334-Cys-338, and Cys-342-Cys-367. Phosphothreonine is present on Thr-182. Asn-259 carries N-linked (GlcNAc...) asparagine glycosylation. Residue Asn-421 is glycosylated (N-linked (GlcNAc...) asparagine). 3 disulfide bridges follow: Cys-475-Cys-504, Cys-511-Cys-519, and Cys-514-Cys-527. N-linked (GlcNAc...) asparagine glycosylation occurs at Asn-529. 8 disulfides stabilise this stretch: Cys-530-Cys-539, Cys-543-Cys-559, Cys-562-Cys-575, Cys-566-Cys-583, Cys-586-Cys-595, Cys-599-Cys-622, Cys-625-Cys-633, and Cys-629-Cys-641. The N-linked (GlcNAc...) asparagine glycan is linked to Asn-570. Residue Asn-628 is glycosylated (N-linked (GlcNAc...) asparagine). A helical transmembrane segment spans residues 654–674; sequence IAAVVGILLAVVVGLVLGILI. A required for interaction with KPNB1 and EEA1 region spans residues 675–688; the sequence is KRRRQKIRKYTMRR. The short motif at 675 to 688 is the Nuclear localization signal element; sequence KRRRQKIRKYTMRR. The Cytoplasmic portion of the chain corresponds to 675 to 1259; the sequence is KRRRQKIRKY…PEYLGLDVPV (585 aa). Residues 719 to 986 form the Protein kinase domain; that stretch reads LRKVKVLGSG…RMARDPQRFV (268 aa). Residues 725 to 733 and Lys-752 contribute to the ATP site; that span reads LGSGAFGTV. The Proton acceptor role is filled by Asp-844. Tyr-876 carries the phosphotyrosine modification. The tract at residues 1027-1183 is disordered; the sequence is QGFFCPEPTP…PKTLSPGKNG (157 aa). Residues Ser-1077, Ser-1082, and Ser-1106 each carry the phosphoserine modification. Residue Tyr-1111 is modified to Phosphotyrosine. At Tyr-1138 the chain carries Phosphotyrosine; by autocatalysis. The span at 1145-1160 shows a compositional bias: pro residues; the sequence is WPQPPLALEGPLPPSR. Thr-1165 is modified (phosphothreonine). Positions 1199-1201 are interaction with PIK3C2B; the sequence is EYL. Phosphotyrosine is present on Tyr-1200. Residues 1203–1259 form a disordered region; it reads PRGRAAPQPHPPPAFSPAFDNLYYWDQDPSERGSPPSTFEGTPTAENPEYLGLDVPV. The segment covering 1237-1247 has biased composition (polar residues); that stretch reads PPSTFEGTPTA. Tyr-1252 bears the Phosphotyrosine; by autocatalysis mark.

This sequence belongs to the protein kinase superfamily. Tyr protein kinase family. EGF receptor subfamily. As to quaternary structure, homodimer. Heterodimer with EGFR, ERBB3 and ERBB4. Part of a complex with EGFR and either PIK3C2A or PIK3C2B. May interact with PIK3C2B when phosphorylated on Tyr-1200. Interacts with PRKCABP and PLXNB1. Interacts (when phosphorylated on Tyr-1252) with MEMO1. Interacts with MUC1. Interacts (when phosphorylated on Tyr-1138) with GRB7 (via SH2 domain). Interacts (when phosphorylated on Tyr-1252) with ERBIN. Interacts with SRC, KPNB1, PTK6, RANBP2, EEA1, CRM1, CLTC, RPA194, MYOC and ACTB. Interacts (preferentially with the tyrosine phosphorylated form) with CPNE3; this interaction occurs at the cell membrane and is increased in a growth factor heregulin-dependent manner. Interacts with HSP90AA1 and HSP90AB1 in an ATP-dependent manner; the interaction suppresses ERBB2 kinase activity. Interacts with SORL1; this interaction regulates ERBB2 subcellular distribution by promoting its recycling after internalization from endosomes back to the plasma membrane, hence stimulates ERBB2-mediated signaling. Interacts with SH3BGRL. Interacts with ROR1. Autophosphorylated. Autophosphorylation occurs in trans, i.e. one subunit of the dimeric receptor phosphorylates tyrosine residues on the other subunit. Ligand-binding increases phosphorylation on tyrosine residues. Signaling via SEMA4C promotes phosphorylation at Tyr-1252. Dephosphorylated by PTPN12.

The protein resides in the cell membrane. It localises to the cell projection. Its subcellular location is the ruffle membrane. The protein localises to the early endosome. It is found in the cytoplasm. The protein resides in the perinuclear region. It localises to the nucleus. It catalyses the reaction L-tyrosyl-[protein] + ATP = O-phospho-L-tyrosyl-[protein] + ADP + H(+). Protein tyrosine kinase that is part of several cell surface receptor complexes, but that apparently needs a coreceptor for ligand binding. Essential component of a neuregulin-receptor complex, although neuregulins do not interact with it alone. GP30 is a potential ligand for this receptor. Regulates outgrowth and stabilization of peripheral microtubules (MTs). Upon ERBB2 activation, the MEMO1-RHOA-DIAPH1 signaling pathway elicits the phosphorylation and thus the inhibition of GSK3B at cell membrane. This prevents the phosphorylation of APC and CLASP2, allowing its association with the cell membrane. In turn, membrane-bound APC allows the localization of MACF1 to the cell membrane, which is required for microtubule capture and stabilization. Functionally, in the nucleus is involved in transcriptional regulation. Associates with the 5'-TCAAATTC-3' sequence in the PTGS2/COX-2 promoter and activates its transcription. Implicated in transcriptional activation of CDKN1A; the function involves STAT3 and SRC. Involved in the transcription of rRNA genes by RNA Pol I and enhances protein synthesis and cell growth. This is Receptor tyrosine-protein kinase erbB-2 (ERBB2) from Canis lupus familiaris (Dog).